The chain runs to 566 residues: MAINPPVDATQTPEWAALQKHYDELQVEGVSLKKWFAEDAERVEKLSFDAGDLHFDLSKNLIKPETLQLFANLAKAVKLDERTKAMYTGVHINNTEDRAVLHTALRRPVEDEGKYIVDGQDTVKDVRETLDKIYAFADDVRSGKWTGVTGRKIETVVNIGIGGSDLGPVMVYEALKPYADAGISARYISNIDPNDLAEKTKGLDPETTLFIIVSKTFTTLETLTNAREARTWLLEELTANGAIAEGDEAQKAEAIKKHFVAVSTNLEKVEEFGIDPNNAFGFWNWVGGRYSVDSAVGTSLAVVFGPARFEEFLHGFHEIDEYFANTPFEKNVVVLLGMLNVWYRNFFKVASHAVLPYDQYLHRFPAYLQQLTMESNGKSVRWDGTPVTSETGEIFWGEPGTNGQHAFYQLIHQGTQLIPADFIAFVNTPNPTKDGDQDVHELFLGNYFAQTKALAFGKTADEVRAEGTPEEIVPARVFSGNRPTTSIFGVALTPFALGELIALYEHITFVEGTVWGLDSYDQWGVELGKQLAKQITPAISQDDDALAAQDASTQSLIKFYRANREF.

Catalysis depends on E374, which acts as the Proton donor. Active-site residues include H405 and K529.

The protein belongs to the GPI family.

The protein localises to the cytoplasm. It carries out the reaction alpha-D-glucose 6-phosphate = beta-D-fructose 6-phosphate. Its pathway is carbohydrate biosynthesis; gluconeogenesis. The protein operates within carbohydrate degradation; glycolysis; D-glyceraldehyde 3-phosphate and glycerone phosphate from D-glucose: step 2/4. Catalyzes the reversible isomerization of glucose-6-phosphate to fructose-6-phosphate. This is Glucose-6-phosphate isomerase from Bifidobacterium longum (strain NCC 2705).